The following is a 225-amino-acid chain: MTDHHTRETPRNPYAGAYPGNLFMVVAPSGAGKSTLVNALLAGDDAIRLSISYTTRPPRPKELDGEHYHFTTVDDFMKRHDAGEFLESAEVHGNYYGTSRVWIEDQMKSGHDVLLEIDWQGAQQVKKQFHNAVEIFILPPSLEALEERLKKRGQDEPNVITRRLLAAGSEMAHAAEAEYVVINENFDRALSELQCLVAATRSRFASQYARHTQLFVQLGIHLPHA.

The region spanning 20–198 (GNLFMVVAPS…ALSELQCLVA (179 aa)) is the Guanylate kinase-like domain. Position 27–34 (27–34 (APSGAGKS)) interacts with ATP.

It belongs to the guanylate kinase family.

Its subcellular location is the cytoplasm. The catalysed reaction is GMP + ATP = GDP + ADP. Functionally, essential for recycling GMP and indirectly, cGMP. The protein is Guanylate kinase of Paraburkholderia xenovorans (strain LB400).